The primary structure comprises 23 residues: Septenin 2c (23 aa).

As to expression, expressed in skin granular glands.

The protein resides in the secreted. May act as an antimicrobial peptide. This is Septenin 2c from Osteopilus septentrionalis (Cuban treefrog).